A 98-amino-acid polypeptide reads, in one-letter code: MTLVYMNMALAFTISLLGLLMYRSHLMSSLLCLEGMMLSLFVTMAVTILNSHLILANMIPIILLVFAACEAALGLSLLVMVSNTYGVDHVQNLNLLQC.

The next 3 membrane-spanning stretches (helical) occupy residues 1-21 (MTLV…GLLM), 29-49 (SLLC…VTIL), and 61-81 (IILL…LVMV).

The protein belongs to the complex I subunit 4L family. As to quaternary structure, core subunit of respiratory chain NADH dehydrogenase (Complex I) which is composed of 45 different subunits.

Its subcellular location is the mitochondrion inner membrane. It catalyses the reaction a ubiquinone + NADH + 5 H(+)(in) = a ubiquinol + NAD(+) + 4 H(+)(out). Its function is as follows. Core subunit of the mitochondrial membrane respiratory chain NADH dehydrogenase (Complex I) which catalyzes electron transfer from NADH through the respiratory chain, using ubiquinone as an electron acceptor. Part of the enzyme membrane arm which is embedded in the lipid bilayer and involved in proton translocation. The protein is NADH-ubiquinone oxidoreductase chain 4L (MT-ND4L) of Rousettus aegyptiacus (Egyptian fruit bat).